The sequence spans 196 residues: Glycerol-3-phosphate acyltransferase (196 aa).

5 helical membrane passes run 1-21, 53-73, 78-98, 112-132, and 152-172; these read MIIL…GYLT, AITA…GSLL, GALV…FLKF, IMTS…VMLI, and LLFG…VMIF.

It belongs to the PlsY family. As to quaternary structure, probably interacts with PlsX.

It is found in the cell membrane. It carries out the reaction an acyl phosphate + sn-glycerol 3-phosphate = a 1-acyl-sn-glycero-3-phosphate + phosphate. Its pathway is lipid metabolism; phospholipid metabolism. Functionally, catalyzes the transfer of an acyl group from acyl-phosphate (acyl-PO(4)) to glycerol-3-phosphate (G3P) to form lysophosphatidic acid (LPA). This enzyme utilizes acyl-phosphate as fatty acyl donor, but not acyl-CoA or acyl-ACP. The sequence is that of Glycerol-3-phosphate acyltransferase from Carboxydothermus hydrogenoformans (strain ATCC BAA-161 / DSM 6008 / Z-2901).